The sequence spans 130 residues: Small ribosomal subunit protein uS8 (130 aa).

This sequence belongs to the universal ribosomal protein uS8 family. Part of the 30S ribosomal subunit. Contacts proteins S5 and S12.

Its function is as follows. One of the primary rRNA binding proteins, it binds directly to 16S rRNA central domain where it helps coordinate assembly of the platform of the 30S subunit. This is Small ribosomal subunit protein uS8 from Proteus mirabilis (strain HI4320).